Consider the following 117-residue polypeptide: ATP-dependent Clp protease adapter protein ClpS 1 (117 aa).

Residues 1-33 are disordered; that stretch reads MIAMPVRMQQGSEGDGGGPSRGTSVITRTKPKT.

It belongs to the ClpS family. As to quaternary structure, binds to the N-terminal domain of the chaperone ClpA.

Functionally, involved in the modulation of the specificity of the ClpAP-mediated ATP-dependent protein degradation. This chain is ATP-dependent Clp protease adapter protein ClpS 1, found in Rhizobium meliloti (strain 1021) (Ensifer meliloti).